Here is a 259-residue protein sequence, read N- to C-terminus: Flagellar L-ring protein 1 (259 aa).

Positions 1 to 15 are cleaved as a signal peptide; it reads MKRICLLALITTMSG. A lipid anchor (N-palmitoyl cysteine) is attached at Cys-16. Residue Cys-16 is the site of S-diacylglycerol cysteine attachment. Positions 38-63 are disordered; that stretch reads EGDKSKDESSGIVDTLRGRNDPVAGD.

This sequence belongs to the FlgH family. The basal body constitutes a major portion of the flagellar organelle and consists of four rings (L,P,S, and M) mounted on a central rod.

It localises to the cell outer membrane. It is found in the bacterial flagellum basal body. Functionally, assembles around the rod to form the L-ring and probably protects the motor/basal body from shearing forces during rotation. The protein is Flagellar L-ring protein 1 (flgH1) of Vibrio parahaemolyticus serotype O3:K6 (strain RIMD 2210633).